Here is a 186-residue protein sequence, read N- to C-terminus: Peptidyl-tRNA hydrolase (186 aa).

Y14 contributes to the tRNA binding site. Catalysis depends on H19, which acts as the Proton acceptor. The tRNA site is built by Y60 and N62.

Belongs to the PTH family. As to quaternary structure, monomer.

The protein resides in the cytoplasm. The catalysed reaction is an N-acyl-L-alpha-aminoacyl-tRNA + H2O = an N-acyl-L-amino acid + a tRNA + H(+). Its function is as follows. Hydrolyzes ribosome-free peptidyl-tRNAs (with 1 or more amino acids incorporated), which drop off the ribosome during protein synthesis, or as a result of ribosome stalling. In terms of biological role, catalyzes the release of premature peptidyl moieties from peptidyl-tRNA molecules trapped in stalled 50S ribosomal subunits, and thus maintains levels of free tRNAs and 50S ribosomes. This Mycoplasmopsis pulmonis (strain UAB CTIP) (Mycoplasma pulmonis) protein is Peptidyl-tRNA hydrolase.